The following is a 335-amino-acid chain: Epidermal differentiation-specific protein (335 aa).

Beta/gamma crystallin 'Greek key' domains lie at 2–42 (NTIT…KIVG), 43–81 (QPWILHQDINYSGQCLPLEEGEYSGISMNDGASSLRLIT), 87–126 (PQITVYEHVNGGGKALVLTEETNLAFGNMHDNISSHRVQR), and 127–169 (GAWA…YPLR).

The protein belongs to the beta/gamma-crystallin family. As to expression, epidermis specific.

The chain is Epidermal differentiation-specific protein from Cynops pyrrhogaster (Japanese fire-bellied newt).